The following is a 124-amino-acid chain: Small ribosomal subunit protein uS12 (124 aa).

The interval 1–23 (MATINQLVRKPRKRPVAKSDVPA) is disordered. At D89 the chain carries 3-methylthioaspartic acid. The segment at 101–124 (ALDTSGVQNRRQGRSKYGTKRPKS) is disordered. Residues 111-124 (RQGRSKYGTKRPKS) are compositionally biased toward basic residues.

It belongs to the universal ribosomal protein uS12 family. Part of the 30S ribosomal subunit. Contacts proteins S8 and S17. May interact with IF1 in the 30S initiation complex.

Functionally, with S4 and S5 plays an important role in translational accuracy. In terms of biological role, interacts with and stabilizes bases of the 16S rRNA that are involved in tRNA selection in the A site and with the mRNA backbone. Located at the interface of the 30S and 50S subunits, it traverses the body of the 30S subunit contacting proteins on the other side and probably holding the rRNA structure together. The combined cluster of proteins S8, S12 and S17 appears to hold together the shoulder and platform of the 30S subunit. The protein is Small ribosomal subunit protein uS12 of Chromohalobacter salexigens (strain ATCC BAA-138 / DSM 3043 / CIP 106854 / NCIMB 13768 / 1H11).